The sequence spans 357 residues: UDP-N-acetylglucosamine--N-acetylmuramyl-(pentapeptide) pyrophosphoryl-undecaprenol N-acetylglucosamine transferase (357 aa).

Residues 13-15 (TGG), Asn125, Arg161, Ser189, Ile243, and Gln288 contribute to the UDP-N-acetyl-alpha-D-glucosamine site.

The protein belongs to the glycosyltransferase 28 family. MurG subfamily.

It is found in the cell inner membrane. It carries out the reaction di-trans,octa-cis-undecaprenyl diphospho-N-acetyl-alpha-D-muramoyl-L-alanyl-D-glutamyl-meso-2,6-diaminopimeloyl-D-alanyl-D-alanine + UDP-N-acetyl-alpha-D-glucosamine = di-trans,octa-cis-undecaprenyl diphospho-[N-acetyl-alpha-D-glucosaminyl-(1-&gt;4)]-N-acetyl-alpha-D-muramoyl-L-alanyl-D-glutamyl-meso-2,6-diaminopimeloyl-D-alanyl-D-alanine + UDP + H(+). The protein operates within cell wall biogenesis; peptidoglycan biosynthesis. Its function is as follows. Cell wall formation. Catalyzes the transfer of a GlcNAc subunit on undecaprenyl-pyrophosphoryl-MurNAc-pentapeptide (lipid intermediate I) to form undecaprenyl-pyrophosphoryl-MurNAc-(pentapeptide)GlcNAc (lipid intermediate II). In Polynucleobacter asymbioticus (strain DSM 18221 / CIP 109841 / QLW-P1DMWA-1) (Polynucleobacter necessarius subsp. asymbioticus), this protein is UDP-N-acetylglucosamine--N-acetylmuramyl-(pentapeptide) pyrophosphoryl-undecaprenol N-acetylglucosamine transferase.